A 298-amino-acid polypeptide reads, in one-letter code: ATP synthase F(1) complex subunit gamma, mitochondrial (298 aa).

A mitochondrion-targeting transit peptide spans 1 to 25; that stretch reads MFSRAGVAGLSAWTLQPQWIQVRNM. The residue at position 39 (Lys-39) is an N6-acetyllysine. Position 49 is an N6-succinyllysine (Lys-49). Lys-55 bears the N6-acetyllysine mark. The residue at position 115 (Lys-115) is an N6-acetyllysine; alternate. N6-succinyllysine; alternate is present on Lys-115. The residue at position 146 (Ser-146) is a Phosphoserine. At Lys-154 the chain carries N6-acetyllysine; alternate. At Lys-154 the chain carries N6-succinyllysine; alternate. Residue Lys-197 is modified to N6-acetyllysine. N6-succinyllysine is present on Lys-270.

The protein belongs to the ATPase gamma chain family. As to quaternary structure, component of the ATP synthase complex composed at least of ATP5F1A/subunit alpha, ATP5F1B/subunit beta, ATP5MC1/subunit c (homooctomer), MT-ATP6/subunit a, MT-ATP8/subunit 8, ATP5ME/subunit e, ATP5MF/subunit f, ATP5MG/subunit g, ATP5MK/subunit k, ATP5MJ/subunit j, ATP5F1C/subunit gamma, ATP5F1D/subunit delta, ATP5F1E/subunit epsilon, ATP5PF/subunit F6, ATP5PB/subunit b, ATP5PD/subunit d, ATP5PO/subunit OSCP. ATP synthase complex consists of a soluble F(1) head domain (subunits alpha(3) and beta(3)) - the catalytic core - and a membrane F(0) domain - the membrane proton channel (subunits c, a, 8, e, f, g, k and j). These two domains are linked by a central stalk (subunits gamma, delta, and epsilon) rotating inside the F1 region and a stationary peripheral stalk (subunits F6, b, d, and OSCP). Interacts with FLVCR2; this interaction occurs in the absence of heme and is disrupted upon heme binding.

Its subcellular location is the mitochondrion inner membrane. Functionally, subunit gamma, of the mitochondrial membrane ATP synthase complex (F(1)F(0) ATP synthase or Complex V) that produces ATP from ADP in the presence of a proton gradient across the membrane which is generated by electron transport complexes of the respiratory chain. ATP synthase complex consist of a soluble F(1) head domain - the catalytic core - and a membrane F(1) domain - the membrane proton channel. These two domains are linked by a central stalk rotating inside the F(1) region and a stationary peripheral stalk. During catalysis, ATP synthesis in the catalytic domain of F(1) is coupled via a rotary mechanism of the central stalk subunits to proton translocation. In vivo, can only synthesize ATP although its ATP hydrolase activity can be activated artificially in vitro. With the central stalk subunit delta, is essential for the biogenesis of F(1) catalytic part of the ATP synthase complex namely in the formation of F1 assembly intermediate. The sequence is that of ATP synthase F(1) complex subunit gamma, mitochondrial from Macaca fascicularis (Crab-eating macaque).